Reading from the N-terminus, the 128-residue chain is Large ribosomal subunit protein bL17 (128 aa).

Belongs to the bacterial ribosomal protein bL17 family. Part of the 50S ribosomal subunit. Contacts protein L32.

This Streptococcus uberis (strain ATCC BAA-854 / 0140J) protein is Large ribosomal subunit protein bL17.